A 190-amino-acid polypeptide reads, in one-letter code: Nucleoside triphosphate pyrophosphatase (190 aa).

D69 functions as the Proton acceptor in the catalytic mechanism.

It belongs to the Maf family. A divalent metal cation is required as a cofactor.

Its subcellular location is the cytoplasm. It carries out the reaction a ribonucleoside 5'-triphosphate + H2O = a ribonucleoside 5'-phosphate + diphosphate + H(+). The catalysed reaction is a 2'-deoxyribonucleoside 5'-triphosphate + H2O = a 2'-deoxyribonucleoside 5'-phosphate + diphosphate + H(+). Functionally, nucleoside triphosphate pyrophosphatase. May have a dual role in cell division arrest and in preventing the incorporation of modified nucleotides into cellular nucleic acids. In Helicobacter pylori (strain G27), this protein is Nucleoside triphosphate pyrophosphatase.